A 280-amino-acid chain; its full sequence is MATSLLLRHSSAVFFSQSSFFTKNKSFRSFTSIKMEKGEAENAVKTKKVFVAGATGQTGKRIVEQLLSRGFAVKAGVRDVEKAKTSFKDDPSLQIVRADVTEGPDKLAEVIGDDSQAVICATGFRPGFDIFTPWKVDNFGTVNLVDACRKQGVEKFVLVSSILVNGAAMGQILNPAYLFLNLFGLTLVAKLQAEKYIKKSGINYTIVRPGGLKNDPPTGNVVMEPEDTLYEGSISRDLVAEVAVEALLQEESSFKVVEIVARAEAPKRSYKDLFASVKGQ.

The transit peptide at 1-51 (MATSLLLRHSSAVFFSQSSFFTKNKSFRSFTSIKMEKGEAENAVKTKKVFV) directs the protein to the chloroplast.

It belongs to the NAD(P)-dependent epimerase/dehydratase family.

It localises to the plastid. Its subcellular location is the chloroplast. It is found in the plastoglobule. This is an uncharacterized protein from Arabidopsis thaliana (Mouse-ear cress).